The chain runs to 217 residues: MQNRLQELLTRIGLSLEKPVCDRLLWYLDEMLRWNRRINLTAIENKEEALEKHLLDSLTVVPLLRGDERLLDMGSGAGLPSIPIKIARPQMCVLSVDSVHKKIVFQQHVARQLKLQGFEARACRIQSLSQGESETSFDVVTARALTHLSDLLSMAEPLLNDKGRLIAMKGPDGEAELAECAQQIRKAGFVAEPLQHLSLPLSGSERTLVVLKRKPGR.

S-adenosyl-L-methionine is bound by residues Gly-74, Leu-79, Ile-125 to Gln-126, and Arg-143.

This sequence belongs to the methyltransferase superfamily. RNA methyltransferase RsmG family.

It is found in the cytoplasm. It catalyses the reaction guanosine(527) in 16S rRNA + S-adenosyl-L-methionine = N(7)-methylguanosine(527) in 16S rRNA + S-adenosyl-L-homocysteine. Functionally, specifically methylates the N7 position of guanine in position 527 of 16S rRNA. This is Ribosomal RNA small subunit methyltransferase G from Syntrophotalea carbinolica (strain DSM 2380 / NBRC 103641 / GraBd1) (Pelobacter carbinolicus).